Consider the following 128-residue polypeptide: Prokineticin-2 (128 aa).

Residues 1–27 form the signal peptide; the sequence is MRSSRCARLLLLLLLPPLLLTPPAGDA. Cystine bridges form between C34/C46, C40/C58, C45/C106, C68/C114, and C108/C124. A disordered region spans residues 71 to 95; sequence MTRKNHFGNGRQERRKRKRRRKKKV. The span at 83–95 shows a compositional bias: basic residues; sequence ERRKRKRRRKKKV.

This sequence belongs to the AVIT (prokineticin) family.

Its subcellular location is the secreted. In terms of biological role, may function as an output molecule from the suprachiasmatic nucleus (SCN) that transmits behavioral circadian rhythm. May also function locally within the SCN to synchronize output. Potently contracts gastrointestinal (GI) smooth muscle. This Bos taurus (Bovine) protein is Prokineticin-2 (PROK2).